The chain runs to 448 residues: Glutamyl-tRNA reductase (448 aa).

Residues 49–52, Ser109, 114–116, and Gln120 each bind substrate; these read TCNR and ETQ. Cys50 functions as the Nucleophile in the catalytic mechanism. 189–194 provides a ligand contact to NADP(+); the sequence is GAGEMS.

Belongs to the glutamyl-tRNA reductase family. As to quaternary structure, homodimer.

The enzyme catalyses (S)-4-amino-5-oxopentanoate + tRNA(Glu) + NADP(+) = L-glutamyl-tRNA(Glu) + NADPH + H(+). The protein operates within porphyrin-containing compound metabolism; protoporphyrin-IX biosynthesis; 5-aminolevulinate from L-glutamyl-tRNA(Glu): step 1/2. Its function is as follows. Catalyzes the NADPH-dependent reduction of glutamyl-tRNA(Glu) to glutamate 1-semialdehyde (GSA). The chain is Glutamyl-tRNA reductase from Staphylococcus aureus (strain Mu3 / ATCC 700698).